The primary structure comprises 759 residues: uncharacterized protein (759 aa).

This is an uncharacterized protein from Escherichia coli (strain K12).